Reading from the N-terminus, the 192-residue chain is Probable nicotinate-nucleotide adenylyltransferase (192 aa).

It belongs to the NadD family.

It carries out the reaction nicotinate beta-D-ribonucleotide + ATP + H(+) = deamido-NAD(+) + diphosphate. Its pathway is cofactor biosynthesis; NAD(+) biosynthesis; deamido-NAD(+) from nicotinate D-ribonucleotide: step 1/1. Catalyzes the reversible adenylation of nicotinate mononucleotide (NaMN) to nicotinic acid adenine dinucleotide (NaAD). This Rhizobium etli (strain ATCC 51251 / DSM 11541 / JCM 21823 / NBRC 15573 / CFN 42) protein is Probable nicotinate-nucleotide adenylyltransferase.